The sequence spans 128 residues: Cytochrome c' (128 aa).

Residues Gln-13, Gln-17, Glu-69, Thr-70, Cys-118, Cys-121, and His-122 each contribute to the heme c site.

Binds 1 heme c group covalently per subunit.

Its function is as follows. Cytochrome c' is the most widely occurring bacterial c-type cytochrome. Cytochromes c' are high-spin proteins and the heme has no sixth ligand. Their exact function is not known. The chain is Cytochrome c' from Magnetospirillum fulvum (Rhodospirillum fulvum).